The following is a 254-amino-acid chain: Type III pantothenate kinase (254 aa).

ATP is bound at residue 6 to 13; it reads DVGNTNIV. Residues phenylalanine 100 and 107–110 each bind substrate; that span reads GADR. Aspartate 109 (proton acceptor) is an active-site residue. Position 129 (aspartate 129) interacts with K(+). Threonine 132 serves as a coordination point for ATP. Residue threonine 184 participates in substrate binding.

The protein belongs to the type III pantothenate kinase family. Homodimer. NH4(+) is required as a cofactor. It depends on K(+) as a cofactor.

Its subcellular location is the cytoplasm. It carries out the reaction (R)-pantothenate + ATP = (R)-4'-phosphopantothenate + ADP + H(+). The protein operates within cofactor biosynthesis; coenzyme A biosynthesis; CoA from (R)-pantothenate: step 1/5. In terms of biological role, catalyzes the phosphorylation of pantothenate (Pan), the first step in CoA biosynthesis. The polypeptide is Type III pantothenate kinase (Moorella thermoacetica (strain ATCC 39073 / JCM 9320)).